Here is a 350-residue protein sequence, read N- to C-terminus: Gene 40 protein (350 aa).

ATP is bound at residue 237-244 (AVKESGKT).

The sequence is that of Gene 40 protein (40) from Bacillus phage SP01 (Bacteriophage SP01).